The chain runs to 83 residues: U2-hexatoxin-Hi1a (83 aa).

The signal sequence occupies residues 1 to 23 (MRNTTFLVLNVMLLVSVALFCAA). A propeptide spanning residues 24-45 (DPEMEKSSFAEILDTGNPEQER) is cleaved from the precursor. 4 disulfides stabilise this stretch: C47–C63, C54–C68, C62–C78, and C70–C76.

Belongs to the neurotoxin 07 (Beta/delta-agtx) family. Expressed by the venom gland.

The protein localises to the secreted. Its function is as follows. Inhibits sodium channels (Nav) of insects. The protein is U2-hexatoxin-Hi1a of Hadronyche infensa (Fraser island funnel-web spider).